Consider the following 277-residue polypeptide: 5'-nucleotidase SurE (277 aa).

4 residues coordinate a divalent metal cation: aspartate 14, aspartate 15, serine 46, and asparagine 104.

Belongs to the SurE nucleotidase family. A divalent metal cation is required as a cofactor.

It is found in the cytoplasm. It catalyses the reaction a ribonucleoside 5'-phosphate + H2O = a ribonucleoside + phosphate. Functionally, nucleotidase that shows phosphatase activity on nucleoside 5'-monophosphates. The protein is 5'-nucleotidase SurE of Picosynechococcus sp. (strain ATCC 27264 / PCC 7002 / PR-6) (Agmenellum quadruplicatum).